A 950-amino-acid polypeptide reads, in one-letter code: Leucine--tRNA ligase 2 (950 aa).

The 'HIGH' region motif lies at 47–57 (PYPNSPFHLGH). The 'KMSKS' region motif lies at 631 to 635 (KMSKS). Lys-634 is an ATP binding site.

It belongs to the class-I aminoacyl-tRNA synthetase family.

The protein resides in the cytoplasm. The enzyme catalyses tRNA(Leu) + L-leucine + ATP = L-leucyl-tRNA(Leu) + AMP + diphosphate. This is Leucine--tRNA ligase 2 from Metallosphaera sedula (strain ATCC 51363 / DSM 5348 / JCM 9185 / NBRC 15509 / TH2).